The chain runs to 396 residues: Cystathionine beta-lyase (396 aa).

Lysine 214 is subject to N6-(pyridoxal phosphate)lysine.

This sequence belongs to the trans-sulfuration enzymes family. As to quaternary structure, homodimer. Pyridoxal 5'-phosphate is required as a cofactor.

It is found in the cytoplasm. The catalysed reaction is L,L-cystathionine + H2O = L-homocysteine + pyruvate + NH4(+). It catalyses the reaction an S-substituted L-cysteine + H2O = a thiol + pyruvate + NH4(+). It participates in amino-acid biosynthesis; L-methionine biosynthesis via de novo pathway; L-homocysteine from L-cystathionine: step 1/1. Catalyzes the cleavage of cystathionine to homocysteine, pyruvate and ammonia during methionine biosynthesis. Also has cytotoxic activity toward osteogenic, osteosarcoma and tracheal cells, in vitro. The chemical basis for cell toxicity might be the formation and subsequent transfer of sulfane-sulfur to proteins, derived via beta-cystathionase cleavage of L-cystine. In Bordetella avium, this protein is Cystathionine beta-lyase (metC).